Reading from the N-terminus, the 685-residue chain is Tripartite terminase subunit 1 (685 aa).

The C3H1-type zinc finger occupies 173–201; sequence CWRCVGELMVLPNHGNPSTAEGTHVSCNH. Disordered regions lie at residues 231 to 254 and 394 to 423; these read EEKA…EAEG and LGRG…SGAL. The span at 395-407 shows a compositional bias: basic and acidic residues; the sequence is GRGEEEASRESPE. 619 to 626 is an ATP binding site; that stretch reads YNKTWGRS.

It belongs to the herpesviridae TRM1 protein family. Associates with TRM2 and TRM3 to form the tripartite terminase complex. Interacts with portal protein.

Its subcellular location is the host nucleus. In terms of biological role, component of the molecular motor that translocates viral genomic DNA in empty capsid during DNA packaging. Forms a tripartite terminase complex together with TRM2 and TRM3 in the host cytoplasm. Once the complex reaches the host nucleus, it interacts with the capsid portal vertex. This portal forms a ring in which genomic DNA is translocated into the capsid. TRM1 carries an endonuclease activity that plays an important role for the cleavage of concatemeric viral DNA into unit length genomes. The chain is Tripartite terminase subunit 1 from Epstein-Barr virus (strain B95-8) (HHV-4).